The primary structure comprises 292 residues: Glycine--tRNA ligase alpha subunit (292 aa).

This sequence belongs to the class-II aminoacyl-tRNA synthetase family. Tetramer of two alpha and two beta subunits.

It localises to the cytoplasm. The catalysed reaction is tRNA(Gly) + glycine + ATP = glycyl-tRNA(Gly) + AMP + diphosphate. This Geobacter sulfurreducens (strain ATCC 51573 / DSM 12127 / PCA) protein is Glycine--tRNA ligase alpha subunit.